Here is a 282-residue protein sequence, read N- to C-terminus: 4-diphosphocytidyl-2-C-methyl-D-erythritol kinase (282 aa).

Lys15 is a catalytic residue. 98–108 (PMGGGVGGGSS) contributes to the ATP binding site. Residue Asp140 is part of the active site.

The protein belongs to the GHMP kinase family. IspE subfamily.

The catalysed reaction is 4-CDP-2-C-methyl-D-erythritol + ATP = 4-CDP-2-C-methyl-D-erythritol 2-phosphate + ADP + H(+). It participates in isoprenoid biosynthesis; isopentenyl diphosphate biosynthesis via DXP pathway; isopentenyl diphosphate from 1-deoxy-D-xylulose 5-phosphate: step 3/6. In terms of biological role, catalyzes the phosphorylation of the position 2 hydroxy group of 4-diphosphocytidyl-2C-methyl-D-erythritol. In Azoarcus sp. (strain BH72), this protein is 4-diphosphocytidyl-2-C-methyl-D-erythritol kinase.